Consider the following 944-residue polypeptide: Isoleucine--tRNA ligase (944 aa).

A 'HIGH' region motif is present at residues 58 to 68; it reads PYANGQIHIGH. Position 568 (E568) interacts with L-isoleucyl-5'-AMP. Residues 609-613 carry the 'KMSKS' region motif; sequence KMSKS. An ATP-binding site is contributed by K612. Zn(2+) is bound by residues C907, C910, C927, and C930.

Belongs to the class-I aminoacyl-tRNA synthetase family. IleS type 1 subfamily. As to quaternary structure, monomer. Requires Zn(2+) as cofactor.

It is found in the cytoplasm. The enzyme catalyses tRNA(Ile) + L-isoleucine + ATP = L-isoleucyl-tRNA(Ile) + AMP + diphosphate. Functionally, catalyzes the attachment of isoleucine to tRNA(Ile). As IleRS can inadvertently accommodate and process structurally similar amino acids such as valine, to avoid such errors it has two additional distinct tRNA(Ile)-dependent editing activities. One activity is designated as 'pretransfer' editing and involves the hydrolysis of activated Val-AMP. The other activity is designated 'posttransfer' editing and involves deacylation of mischarged Val-tRNA(Ile). The sequence is that of Isoleucine--tRNA ligase from Idiomarina loihiensis (strain ATCC BAA-735 / DSM 15497 / L2-TR).